A 137-amino-acid polypeptide reads, in one-letter code: Small ribosomal subunit protein uS12 (137 aa).

The disordered stretch occupies residues M1 to P55. D102 is modified (3-methylthioaspartic acid). Residues S118 to K137 form a disordered region.

It belongs to the universal ribosomal protein uS12 family. In terms of assembly, part of the 30S ribosomal subunit. Contacts proteins S8 and S17. May interact with IF1 in the 30S initiation complex.

In terms of biological role, with S4 and S5 plays an important role in translational accuracy. Functionally, interacts with and stabilizes bases of the 16S rRNA that are involved in tRNA selection in the A site and with the mRNA backbone. Located at the interface of the 30S and 50S subunits, it traverses the body of the 30S subunit contacting proteins on the other side and probably holding the rRNA structure together. The combined cluster of proteins S8, S12 and S17 appears to hold together the shoulder and platform of the 30S subunit. The chain is Small ribosomal subunit protein uS12 from Staphylococcus saprophyticus subsp. saprophyticus (strain ATCC 15305 / DSM 20229 / NCIMB 8711 / NCTC 7292 / S-41).